The chain runs to 185 residues: MNWRSEHVWVELLKGSRKRGNFFWACILFLGSLGFLSVGASSYLGKNIISILPSQQILFFPQGVVMSFYGIAGLFISSYLWCTILWNVGSGYDRFDRKEGIVCIFRWGFPGIKRRVFLQFLMRDIQSIRIQVKEGLSPRRILYMEIRGQGVIPLTRTDEKFFTPREMEQKAAELAYFLRVPIEVF.

2 helical membrane-spanning segments follow: residues 20–40 (GNFF…SVGA) and 57–77 (ILFF…LFIS).

This sequence belongs to the Ycf4 family.

Its subcellular location is the plastid. The protein resides in the chloroplast thylakoid membrane. In terms of biological role, seems to be required for the assembly of the photosystem I complex. In Lolium perenne (Perennial ryegrass), this protein is Photosystem I assembly protein Ycf4.